We begin with the raw amino-acid sequence, 1181 residues long: Poly [ADP-ribose] polymerase tankyrase (1181 aa).

ANK repeat units follow at residues 56 to 85 (RKST…SIQA), 89 to 118 (GGLH…SPNT), 122 to 151 (WNYT…NHTI), 209 to 238 (RRST…DVHA), 242 to 271 (GGLV…NVNA), 275 to 304 (WAFT…DPTL), 362 to 394 (TGDT…LLNE), 398 to 427 (AFLT…KVNA), 431 to 458 (LGQT…DTNI), 483 to 513 (DSET…SVNC), 519 to 548 (RHST…EVYA), 552 to 581 (GGLV…NVNV), 585 to 614 (WKFT…DPMK), 638 to 668 (RGPS…NCRD), 672 to 701 (RNST…DVNA), 705 to 734 (GGLI…VVNA), 738 to 767 (WGFT…DAYM), and 771 to 799 (EGQT…LSQQ). Disordered regions lie at residues 807-834 (SLTS…SAIL) and 864-886 (RISP…DLLP). Residues 889-952 (DTITNVSGFL…LKGIAQLRST (64 aa)) form the SAM domain. Residues 969–1174 (LPDDKEFVAV…YQIVKPDDSS (206 aa)) form the PARP catalytic domain. Positions 1091, 1094, 1099, and 1102 each coordinate Zn(2+).

This sequence belongs to the ARTD/PARP family. In terms of assembly, interacts (via ANK repeats) with PI31.

It carries out the reaction NAD(+) + (ADP-D-ribosyl)n-acceptor = nicotinamide + (ADP-D-ribosyl)n+1-acceptor + H(+).. The enzyme catalyses L-aspartyl-[protein] + NAD(+) = 4-O-(ADP-D-ribosyl)-L-aspartyl-[protein] + nicotinamide. The catalysed reaction is L-glutamyl-[protein] + NAD(+) = 5-O-(ADP-D-ribosyl)-L-glutamyl-[protein] + nicotinamide. Its function is as follows. Stimulates proteasome activity, probably by ADP-ribosylation of PI31. Modulates 26S proteasome assembly. This chain is Poly [ADP-ribose] polymerase tankyrase, found in Drosophila melanogaster (Fruit fly).